Consider the following 99-residue polypeptide: Large ribosomal subunit protein uL23 (99 aa).

The protein belongs to the universal ribosomal protein uL23 family. Part of the 50S ribosomal subunit. Contacts protein L29, and trigger factor when it is bound to the ribosome.

One of the early assembly proteins it binds 23S rRNA. One of the proteins that surrounds the polypeptide exit tunnel on the outside of the ribosome. Forms the main docking site for trigger factor binding to the ribosome. The chain is Large ribosomal subunit protein uL23 from Shewanella sediminis (strain HAW-EB3).